Reading from the N-terminus, the 348-residue chain is Rhodopsin (348 aa).

An N-acetylmethionine modification is found at Met1. The Extracellular segment spans residues 1–36 (MNGTEGPNFYVPFSNATGVVRSPFEYPQYYLAEPWQ). N-linked (GlcNAc...) asparagine glycosylation is found at Asn2 and Asn15. The chain crosses the membrane as a helical span at residues 37–61 (FSMLAAYMFMLIVLGFPINFLTLYV). Residues 62–73 (TVQHKKLRTPLN) lie on the Cytoplasmic side of the membrane. Residues 74 to 96 (YILLNLAVADLFMVFGGFTTTLY) form a helical membrane-spanning segment. At 97–110 (TSLHGYFVFGPTGC) the chain is on the extracellular side. A disulfide bond links Cys110 and Cys187. A helical membrane pass occupies residues 111–133 (NLEGFFATLGGEIALWSLVVLAI). A 'Ionic lock' involved in activated form stabilization motif is present at residues 134–136 (ERY). Topologically, residues 134 to 152 (ERYVVVCKPMSNFRFGENH) are cytoplasmic. Residues 153-173 (AIMGLVFTWIMALACAAPPLV) form a helical membrane-spanning segment. Residues 174–202 (GWSRYIPEGMQCSCGIDYYTLKPEVNNES) lie on the Extracellular side of the membrane. Residue Glu201 participates in Zn(2+) binding. Residues 203 to 224 (FVIYMFVVHFFIPLFVIFFCYG) traverse the membrane as a helical segment. Topologically, residues 225–252 (QLVFTVKEAAAQQQESATTQKAEKEVTR) are cytoplasmic. The helical transmembrane segment at 253–274 (MVIIMVIAFLICWLPYAGVAFY) threads the bilayer. Over 275–286 (IFTHQGSNFGPI) the chain is Extracellular. Gln279 is a binding site for Zn(2+). A helical membrane pass occupies residues 287–308 (FMTLPAFFAKTASIYNPVIYIM). N6-(retinylidene)lysine is present on Lys296. Over 309 to 348 (MNKQFRTCMITTLCCGKNPLGDDEASTTASKTETSQVAPA) the chain is Cytoplasmic. S-palmitoyl cysteine attachment occurs at residues Cys322 and Cys323. Residues 330–348 (DDEASTTASKTETSQVAPA) are interaction with SAG. Ser334 is modified (phosphoserine). 2 positions are modified to phosphothreonine: Thr335 and Thr336. Ser338 bears the Phosphoserine mark. Phosphothreonine is present on residues Thr340 and Thr342. The residue at position 343 (Ser343) is a Phosphoserine.

This sequence belongs to the G-protein coupled receptor 1 family. Opsin subfamily. Homodimer. May form a complex composed of RHO, GRK1 and RCVRN in a Ca(2+)-dependent manner; RCVRN prevents the interaction between GRK1 and RHO. Interacts with GRK1. Interacts (phosphorylated form) with SAG. Interacts with GNAT1. Interacts with GNAT3. SAG and G-proteins compete for a common binding site. Interacts with PRCD; the interaction promotes PRCD stability. Forms a complex with ASAP1 and ARF4. Forms a complex with ASAP1, RAB11A, Rabin8/RAB3IP, ARF4 and RAB11FIP3; the complex regulates Golgi-to-cilia rhodopsin/RHO transport in photoreceptors. Post-translationally, phosphorylated on some or all of the serine and threonine residues present in the C-terminal region. Contains one covalently linked retinal chromophore. Upon light absorption, the covalently bound 11-cis-retinal is converted to all-trans-retinal. After hydrolysis of the Schiff base and release of the covalently bound all-trans-retinal, active rhodopsin is regenerated by binding of a fresh molecule of 11-cis-retinal.

The protein resides in the membrane. It localises to the cell projection. The protein localises to the cilium. It is found in the photoreceptor outer segment. Photoreceptor required for image-forming vision at low light intensity. Required for photoreceptor cell viability after birth. Light-induced isomerization of 11-cis to all-trans retinal triggers a conformational change that activates signaling via G-proteins. Subsequent receptor phosphorylation mediates displacement of the bound G-protein alpha subunit by the arrestin SAG and terminates signaling. The polypeptide is Rhodopsin (RHO) (Otolemur crassicaudatus (Brown greater galago)).